Here is a 397-residue protein sequence, read N- to C-terminus: MPTRLFTSESVTEGHPDKIADAISDAVLDAMLTEDSHSHAAVETVVTTGQVMVCGEVTTEAYVDIADIARSRILDIGYDSSSKGFDGASCGVSVAIDAQSPDIAQGVTAAYETRHGSTDLIDSQGAGDQGLMFGYACTETPSLMPLPIDMAHALSLQLTKVRKEGALDYLCPDGKTQVTIRYNEDDKPVAVDTVIVSSQHRAGIDLDATMTPDLRRLVIDPVLERYDLDHKDMRVLVNPTGKFVIGGPMGDAGLTGRKIIVDTYGGMARHGGGAFSGKDPSKVDRSGAYAMRWVAKNVVAAGLADRCECQVAYAIGAARPVGFRIDTFGTNHVPETVIERAVGEVFDLRPGAIIADLDLLRPIYSQLVAGGHFGRELPGVTWELTDRAEALAATARL.

H15 lines the ATP pocket. A Mg(2+)-binding site is contributed by D17. E43 lines the K(+) pocket. Residues E56 and Q99 each contribute to the L-methionine site. Residues 99–109 (QSPDIAQGVTA) are flexible loop. ATP-binding positions include 173 to 175 (DGK), 242 to 243 (KF), D251, 257 to 258 (RK), A274, and K278. An L-methionine-binding site is contributed by D251. K282 contributes to the L-methionine binding site.

It belongs to the AdoMet synthase family. As to quaternary structure, homotetramer; dimer of dimers. Mg(2+) is required as a cofactor. Requires K(+) as cofactor.

It localises to the cytoplasm. It carries out the reaction L-methionine + ATP + H2O = S-adenosyl-L-methionine + phosphate + diphosphate. It functions in the pathway amino-acid biosynthesis; S-adenosyl-L-methionine biosynthesis; S-adenosyl-L-methionine from L-methionine: step 1/1. In terms of biological role, catalyzes the formation of S-adenosylmethionine (AdoMet) from methionine and ATP. The overall synthetic reaction is composed of two sequential steps, AdoMet formation and the subsequent tripolyphosphate hydrolysis which occurs prior to release of AdoMet from the enzyme. In Cutibacterium acnes (strain DSM 16379 / KPA171202) (Propionibacterium acnes), this protein is S-adenosylmethionine synthase.